We begin with the raw amino-acid sequence, 177 residues long: Large ribosomal subunit protein uL6 (177 aa).

It belongs to the universal ribosomal protein uL6 family. In terms of assembly, part of the 50S ribosomal subunit.

Functionally, this protein binds to the 23S rRNA, and is important in its secondary structure. It is located near the subunit interface in the base of the L7/L12 stalk, and near the tRNA binding site of the peptidyltransferase center. The sequence is that of Large ribosomal subunit protein uL6 from Acinetobacter baumannii (strain AB307-0294).